Here is a 197-residue protein sequence, read N- to C-terminus: Auxin-responsive protein IAA31 (197 aa).

Disordered regions lie at residues 1 to 43 (MENL…DQAK) and 66 to 90 (SCLQ…ETQQ). The EAR-like (transcriptional repression) signature appears at 9–13 (LRLGL). In terms of domain architecture, PB1 spans 99–186 (GLFVKVSMDG…TCKRLRIMKG (88 aa)).

This sequence belongs to the Aux/IAA family. Homodimers and heterodimers. As to expression, highly expressed in etiolated seedlings. Expressed in roots.

It localises to the nucleus. Functionally, aux/IAA proteins are short-lived transcriptional factors that function as repressors of early auxin response genes at low auxin concentrations. This is Auxin-responsive protein IAA31 (IAA31) from Oryza sativa subsp. japonica (Rice).